A 106-amino-acid polypeptide reads, in one-letter code: Glycoprotein GP16 (106 aa).

Post-translationally, glycosylated.

The protein localises to the host cytoplasm. May be involved in formation or transport of the nucleocapsid-containing vesicles around the nuclear membrane. The polypeptide is Glycoprotein GP16 (GP16) (Autographa californica nuclear polyhedrosis virus (AcMNPV)).